A 383-amino-acid polypeptide reads, in one-letter code: Succinyl-diaminopimelate desuccinylase (383 aa).

A Zn(2+)-binding site is contributed by His-74. Asp-76 is a catalytic residue. Asp-107 provides a ligand contact to Zn(2+). The active-site Proton acceptor is the Glu-141. Zn(2+) is bound by residues Glu-142, Glu-170, and His-356.

Belongs to the peptidase M20A family. DapE subfamily. In terms of assembly, homodimer. The cofactor is Zn(2+). It depends on Co(2+) as a cofactor.

It carries out the reaction N-succinyl-(2S,6S)-2,6-diaminopimelate + H2O = (2S,6S)-2,6-diaminopimelate + succinate. It functions in the pathway amino-acid biosynthesis; L-lysine biosynthesis via DAP pathway; LL-2,6-diaminopimelate from (S)-tetrahydrodipicolinate (succinylase route): step 3/3. Functionally, catalyzes the hydrolysis of N-succinyl-L,L-diaminopimelic acid (SDAP), forming succinate and LL-2,6-diaminopimelate (DAP), an intermediate involved in the bacterial biosynthesis of lysine and meso-diaminopimelic acid, an essential component of bacterial cell walls. The polypeptide is Succinyl-diaminopimelate desuccinylase (Cupriavidus taiwanensis (strain DSM 17343 / BCRC 17206 / CCUG 44338 / CIP 107171 / LMG 19424 / R1) (Ralstonia taiwanensis (strain LMG 19424))).